Reading from the N-terminus, the 461-residue chain is ERBB receptor feedback inhibitor 1 (461 aa).

Ser2 carries the N-acetylserine modification. Phosphothreonine is present on residues Thr126 and Thr130. The interval 228-353 is disordered; that stretch reads QNRVVPDPNP…VMPPTQSFAP (126 aa). Residues Ser251 and Ser272 each carry the phosphoserine modification. Residues 265–274 show a composition bias toward polar residues; it reads SSCTHRASPS. The segment covering 283 to 292 has biased composition (pro residues); sequence PPRVPIPPRP. Phosphoserine is present on Ser301. A compositionally biased stretch (basic and acidic residues) spans 311 to 324; sequence DEDRPPKVPPREPL. Residues 325–336 show a composition bias toward polar residues; sequence SRSNSRTPSPKS. The segment at 333-362 is interaction with EGFR and ERBB2 and regulation of EGFR activation; sequence SPKSLPSYLNGVMPPTQSFAPDPKYVSSKA. Residue Ser460 is modified to Phosphoserine.

The protein belongs to the MIG6 family. Interacts with EGFR. Interacts with ERBB2. Detected in lung, in airway epithelial cells and alveolar type 2 cells (at protein level). Detected in uterus stroma, luminal epithelium and glandular epithelium.

It is found in the cytoplasm. Its subcellular location is the cell membrane. The protein localises to the nucleus. In terms of biological role, negative regulator of EGFR signaling in skin morphogenesis. Acts as a negative regulator for several EGFR family members, including ERBB2, ERBB3 and ERBB4. Inhibits EGFR catalytic activity by interfering with its dimerization. Inhibits autophosphorylation of EGFR, ERBB2 and ERBB4. Important for normal keratinocyte proliferation and differentiation. Plays a role in modulating the response to steroid hormones in the uterus. Required for normal response to progesterone in the uterus and for fertility. Mediates epithelial estrogen responses in the uterus by regulating ESR1 levels and activation. Important for regulation of endometrium cell proliferation. Important for normal prenatal and perinatal lung development. This is ERBB receptor feedback inhibitor 1 (Errfi1) from Mus musculus (Mouse).